A 227-amino-acid polypeptide reads, in one-letter code: Cytochrome c oxidase subunit 2 (227 aa).

The Mitochondrial intermembrane portion of the chain corresponds to 1 to 14; sequence MAYPFQLGFQDATS. Residues 15–45 form a helical membrane-spanning segment; that stretch reads PIMEELLHFHDHTLMIVFLISSLVLYIITLM. The Mitochondrial matrix portion of the chain corresponds to 46–59; the sequence is LTTKLTHTSTMDAQ. The chain crosses the membrane as a helical span at residues 60-87; that stretch reads EVETVWTILPAIILILIALPSLRILYMM. Residues 88-227 lie on the Mitochondrial intermembrane side of the membrane; that stretch reads DEVNNPSLTV…FFEKWSASML (140 aa). Positions 161, 196, 198, 200, 204, and 207 each coordinate Cu cation. Glu198 lines the Mg(2+) pocket.

The protein belongs to the cytochrome c oxidase subunit 2 family. In terms of assembly, component of the cytochrome c oxidase (complex IV, CIV), a multisubunit enzyme composed of 14 subunits. The complex is composed of a catalytic core of 3 subunits MT-CO1, MT-CO2 and MT-CO3, encoded in the mitochondrial DNA, and 11 supernumerary subunits COX4I, COX5A, COX5B, COX6A, COX6B, COX6C, COX7A, COX7B, COX7C, COX8 and NDUFA4, which are encoded in the nuclear genome. The complex exists as a monomer or a dimer and forms supercomplexes (SCs) in the inner mitochondrial membrane with NADH-ubiquinone oxidoreductase (complex I, CI) and ubiquinol-cytochrome c oxidoreductase (cytochrome b-c1 complex, complex III, CIII), resulting in different assemblies (supercomplex SCI(1)III(2)IV(1) and megacomplex MCI(2)III(2)IV(2)). Found in a complex with TMEM177, COA6, COX18, COX20, SCO1 and SCO2. Interacts with TMEM177 in a COX20-dependent manner. Interacts with COX20. Interacts with COX16. Cu cation is required as a cofactor.

It is found in the mitochondrion inner membrane. It catalyses the reaction 4 Fe(II)-[cytochrome c] + O2 + 8 H(+)(in) = 4 Fe(III)-[cytochrome c] + 2 H2O + 4 H(+)(out). In terms of biological role, component of the cytochrome c oxidase, the last enzyme in the mitochondrial electron transport chain which drives oxidative phosphorylation. The respiratory chain contains 3 multisubunit complexes succinate dehydrogenase (complex II, CII), ubiquinol-cytochrome c oxidoreductase (cytochrome b-c1 complex, complex III, CIII) and cytochrome c oxidase (complex IV, CIV), that cooperate to transfer electrons derived from NADH and succinate to molecular oxygen, creating an electrochemical gradient over the inner membrane that drives transmembrane transport and the ATP synthase. Cytochrome c oxidase is the component of the respiratory chain that catalyzes the reduction of oxygen to water. Electrons originating from reduced cytochrome c in the intermembrane space (IMS) are transferred via the dinuclear copper A center (CU(A)) of subunit 2 and heme A of subunit 1 to the active site in subunit 1, a binuclear center (BNC) formed by heme A3 and copper B (CU(B)). The BNC reduces molecular oxygen to 2 water molecules using 4 electrons from cytochrome c in the IMS and 4 protons from the mitochondrial matrix. This is Cytochrome c oxidase subunit 2 (MT-CO2) from Balaenoptera musculus (Blue whale).